The chain runs to 268 residues: Ribosomal RNA small subunit methyltransferase A (268 aa).

S-adenosyl-L-methionine is bound by residues Asn-16, Leu-18, Gly-43, Glu-64, Asp-89, and Asn-110.

The protein belongs to the class I-like SAM-binding methyltransferase superfamily. rRNA adenine N(6)-methyltransferase family. RsmA subfamily.

The protein localises to the cytoplasm. It carries out the reaction adenosine(1518)/adenosine(1519) in 16S rRNA + 4 S-adenosyl-L-methionine = N(6)-dimethyladenosine(1518)/N(6)-dimethyladenosine(1519) in 16S rRNA + 4 S-adenosyl-L-homocysteine + 4 H(+). Specifically dimethylates two adjacent adenosines (A1518 and A1519) in the loop of a conserved hairpin near the 3'-end of 16S rRNA in the 30S particle. May play a critical role in biogenesis of 30S subunits. This Pseudomonas syringae pv. syringae (strain B728a) protein is Ribosomal RNA small subunit methyltransferase A.